Consider the following 153-residue polypeptide: SsrA-binding protein (153 aa).

Belongs to the SmpB family.

It is found in the cytoplasm. Its function is as follows. Required for rescue of stalled ribosomes mediated by trans-translation. Binds to transfer-messenger RNA (tmRNA), required for stable association of tmRNA with ribosomes. tmRNA and SmpB together mimic tRNA shape, replacing the anticodon stem-loop with SmpB. tmRNA is encoded by the ssrA gene; the 2 termini fold to resemble tRNA(Ala) and it encodes a 'tag peptide', a short internal open reading frame. During trans-translation Ala-aminoacylated tmRNA acts like a tRNA, entering the A-site of stalled ribosomes, displacing the stalled mRNA. The ribosome then switches to translate the ORF on the tmRNA; the nascent peptide is terminated with the 'tag peptide' encoded by the tmRNA and targeted for degradation. The ribosome is freed to recommence translation, which seems to be the essential function of trans-translation. This Orientia tsutsugamushi (strain Ikeda) (Rickettsia tsutsugamushi) protein is SsrA-binding protein.